Reading from the N-terminus, the 1709-residue chain is Hybrid signal transduction histidine kinase L (1709 aa).

Disordered regions lie at residues 52–192, 206–276, 413–535, and 554–615; these read SNNN…SPPH, FFSG…NSSD, TSNS…NNSC, and QQQQ…IFNN. Residues 53–87 are compositionally biased toward low complexity; it reads NNNNNNNNNNNNNNNNNNNNNNNNNNNNNNNNNNN. The span at 88–100 shows a compositional bias: basic and acidic residues; the sequence is NEEKSNNETEKTL. Low complexity predominate over residues 106-148; that stretch reads TTTTTTTNNNNNNNNNNNNNNNNNNNNNNNNNNNNNNNNNNTN. Polar residues predominate over residues 149–170; that stretch reads SSNDIYMNSPSSTLSSPGNAGN. Composition is skewed to low complexity over residues 413–466, 486–535, and 554–576; these read TSNS…TPNS, NNSP…NNSC, and QQQQQQQSQPTTPTQSTQSPTTS. Residues 585–610 are compositionally biased toward polar residues; that stretch reads LTINTSFKTSPMSSPKSFNKPSQSPQ. Residues 700-771 enclose the PAS domain; sequence ATRKMVTCIE…ATLTDKKTWN (72 aa). The PAC domain maps to 770–822; sequence WNGFIRTRHNNNTLIYFEASISPVLDQFQQILYYNCTKRDVTQKRIDEESKTL. Residues 837 to 1059 enclose the Histidine kinase domain; that stretch reads MMSHDIRTPM…TFTCILKFKK (223 aa). His840 is subject to Phosphohistidine; by autocatalysis. 2 disordered regions span residues 1068–1112 and 1137–1298; these read LLPA…HQQH and QHQL…PTSP. Composition is skewed to low complexity over residues 1075–1112, 1137–1153, and 1176–1194; these read LQQQQQQQQHQQQTQFHQHQQQTQFHQHQQQQLQHQQH, QHQLQQRQHHQQQLQQQ, and NQHIQQQQQQQQQQQQQQQ. A compositionally biased stretch (basic residues) spans 1204-1221; the sequence is HNSHGHNHHGSHHNHNHQ. 2 stretches are compositionally biased toward polar residues: residues 1244 to 1257 and 1275 to 1298; these read NEQQLESITENSFS and NISQSPSPQSIHNGTTINQQPTSP. 2 consecutive Response regulatory domains span residues 1312 to 1492 and 1570 to 1692; these read KMLF…MMYL and KVLV…KKYG. At Asp1366 the chain carries 4-aspartylphosphate. 2 stretches are compositionally biased toward low complexity: residues 1390-1412 and 1420-1440; these read QHLQQQQEQEQQQQQEQQQSELQ and KNSSQNNDNNNNNNKSNSSGG. Positions 1390–1440 are disordered; it reads QHLQQQQEQEQQQQQEQQQSELQKQPDVENKNSSQNNDNNNNNNKSNSSGG. Residue Asp1622 is modified to 4-aspartylphosphate.

In terms of processing, activation probably requires transfer of a phosphate group between a histidine in the kinase core (transmitter) domain and an aspartate of the receiver domain.

The enzyme catalyses ATP + protein L-histidine = ADP + protein N-phospho-L-histidine.. Acts as a receptor histidine kinase for a signal transduction pathway. This protein undergoes an ATP-dependent autophosphorylation at a conserved histidine residue in the kinase core, and a phosphoryl group is then transferred to a conserved aspartate residue in the receiver domain. The chain is Hybrid signal transduction histidine kinase L (dhkL) from Dictyostelium discoideum (Social amoeba).